A 359-amino-acid polypeptide reads, in one-letter code: Alanine racemase (359 aa).

Lys-34 (proton acceptor; specific for D-alanine) is an active-site residue. Lys-34 carries the post-translational modification N6-(pyridoxal phosphate)lysine. Arg-129 contacts substrate. Catalysis depends on Tyr-255, which acts as the Proton acceptor; specific for L-alanine. Met-303 is a substrate binding site.

This sequence belongs to the alanine racemase family. Pyridoxal 5'-phosphate serves as cofactor.

It catalyses the reaction L-alanine = D-alanine. It participates in amino-acid biosynthesis; D-alanine biosynthesis; D-alanine from L-alanine: step 1/1. Its function is as follows. Catalyzes the interconversion of L-alanine and D-alanine. May also act on other amino acids. The chain is Alanine racemase (alr) from Shigella dysenteriae serotype 1 (strain Sd197).